The following is a 405-amino-acid chain: MAVGLGPLPALHPVPGFELGISSAGIKRPGRKDVVVMRCAEGSSVAGVFTLNAFCAAPVILAKQRVQGTVRYLLTNTGNANAGTGEPGLVAARRTCEALAQLTGVDASAVLPYSTGVIGEPLPVEKIEGALQAALDDLSVDNWAAAATGIMTTDTLPKGASRQFTHDGVTITVTGISKGAGMIRPNMATMLGYIATDAKVSQSVLQDLIRDGANKSFNRLTIDGDTSTNDCCMLIATGQADLPEITEAKGLLFEALKKAVFDVCMEVAQAIVRDGEGATKFVTVEVNGGGNHQECLDVGYAVAHSPLIKTALFASDPNWGRILAAVGRAGVPDLDVSKIDVFLGGVCIASQGCRATTYTEEQGSAVMAEAEITIRIELGRGDCSETIWTTDLSHEYVKINAEYRT.

Residues Thr152, Lys178, Thr189, Glu276, Asn400, and Thr405 each contribute to the substrate site. The active-site Nucleophile is Thr189.

The protein belongs to the ArgJ family. As to quaternary structure, heterotetramer of two alpha and two beta chains.

It is found in the cytoplasm. The catalysed reaction is N(2)-acetyl-L-ornithine + L-glutamate = N-acetyl-L-glutamate + L-ornithine. The enzyme catalyses L-glutamate + acetyl-CoA = N-acetyl-L-glutamate + CoA + H(+). The protein operates within amino-acid biosynthesis; L-arginine biosynthesis; L-ornithine and N-acetyl-L-glutamate from L-glutamate and N(2)-acetyl-L-ornithine (cyclic): step 1/1. It functions in the pathway amino-acid biosynthesis; L-arginine biosynthesis; N(2)-acetyl-L-ornithine from L-glutamate: step 1/4. Its function is as follows. Catalyzes two activities which are involved in the cyclic version of arginine biosynthesis: the synthesis of N-acetylglutamate from glutamate and acetyl-CoA as the acetyl donor, and of ornithine by transacetylation between N(2)-acetylornithine and glutamate. The sequence is that of Arginine biosynthesis bifunctional protein ArgJ from Pseudomonas syringae pv. tomato (strain ATCC BAA-871 / DC3000).